A 233-amino-acid polypeptide reads, in one-letter code: Nickel import system ATP-binding protein NikE (233 aa).

The ABC transporter domain occupies isoleucine 2 to valine 228. Glycine 35–serine 42 contributes to the ATP binding site.

This sequence belongs to the ABC transporter superfamily. The complex is composed of two ATP-binding proteins (NikD and NikE), two transmembrane proteins (NikB and NikC) and a solute-binding protein (NikA).

It localises to the cell membrane. The enzyme catalyses Ni(2+)(out) + ATP + H2O = Ni(2+)(in) + ADP + phosphate + H(+). Functionally, part of the ABC transporter complex NikABCDE (Opp2) involved in nickel import. Probably responsible for energy coupling to the transport system. The chain is Nickel import system ATP-binding protein NikE from Staphylococcus aureus (strain USA300).